Here is a 2145-residue protein sequence, read N- to C-terminus: MADELARIQQYEYRQNSNLVLSVDYNLTDRRGREEPTGEVLPITDKEMRKMKMGDRAIKGKAPVQDQKKKRKKKDDEKAQQFGRNVLVDNNELMGAYKPRTQETKQTYEVILSFILDALGDVPREVLCGAADEVLLTLKNDKFRDKEKKKEVEALLGPLTDDRIAVLINLSKKISDFSIEEENKPEGDGDIYENEGVNVQFDSDEEEDDGGMVNEIKGDSEEESEEEEGVDTDYTATLKGDGHLTEDEQKARGILHPRDIDAHWIQRSLAKYFKDPLIAQQKQTEVIGILKNAADDRDAENQLVLLLGFDQFEFIKCLRQNRLMILYCTLLRQANEKERLQIEDDMRSRPELHPILALLQETDEGSVVQVEKSKRDAEKSKKAATAANEAISAGQWQAGRKMLDLNDLTFSQGSHLMSNKRCELPDGSYRRQKKSYEEIHVPALKPRPFAEGEKLVSVSELPKWAQPAFDGYKSLNRIQSRLCDSALRSKEHLLLCAPTGAGKTNVALLTMLQEIGNHLAEDGSVKLDEFKIVYIAPMKSLVQEMVGSFSKRLAPFGITVGEMTGDAQMSKEQFMATQVIVCTPEKYDVVTRKGGERAYNQMVRLLIIDEIHLLHDDRGPVLESIVVRTIRQMEQNHDECRLVGLSATLPNYQDVATFLRVKPEHLHFFDNSYRPVPLEQQYIGVTEKKALKRFQAMNEVVYDKIMEHAGKSQVLVFVHSRKETAKTAKAIRDACLEKDTLSAFMREGSASTEILRTEAEQAKNLDLKDLLPYGFAIHHAGMNRVDRTLVEDLFADRHIQVLFSTATLAWGVNLPAHTVIIKGTQIYNPEKGRWTELGALDIMQMLGRAGRPQYDDRGEGILITNHSELQYYLSLMNQQLPVESQMVSRLTDMLNAEVVLGTVSSVSEATNWLGYTFLFVRMLKNPTLYGITHEQARADPLLEQRRADLIHTACVLLDKAGLIKYDKRSGIIQATELGRIASHFYCTYESMQTYNKLLVETCSDIDLFRIFSMSSEFKLLSVRDEEKLELQKMAEHAPIPIKENLDEASAKTNVLLQAYISQLKLEGFALQADMVFVAQSAGRLFRALFEIVLWRGWAGLAQKVLTLCKMVTQRQWGSLNPLHQFKKIPSEVVRSIDKKNYSFDRLYDLDQHQLGDLIKMPKMGKPLFKFIRQFPKLEMTTLIQPITRTTMRIELTITPDFKWDEKVHGSAEGFWIFIEDTDGEKILHHEFFLLKQKFCSDEHVVKMIVPMFDPMPPLYYVRIVSDRWIGAETVLPISFRHLILPEKYPPPTELLDLQPLPISAVTNKEFQTVFAESGFKVFNPIQTQVFRTVFESNENVIVCAPNGSGKTAIAELAVLRHFENTPEAKAVYITPMEDMATKVYADWKRRLEPAIGHTIVLLTGEQTMDLKLAQRGQLIISTPERWDNISRRWKQRKSVQNVKLFIADDLHMIGASNGAVFEVVCSRTRYISSQLESAVRVVALSSSLTNARDLGMWLGCSASATFNFMPSTRPVPLDLEIKSFNLSHNASRFAAMERPVYQAICRHAGKLEPKPALVFVPVRRQTRPVAVALLTMALADGAPKRFLRLAEHDDTFQALLADIEDESLRESVSCGVGFLHEGTAPKDVHIVQQLFESNAIQVCVVPRGMCYQIEMSAYLVVVMDTQFYNGKYHVYEDYPIADMLHMVGLANRPILDSDAKCVVMCQTSKRAYYKKFLCDPLPVESHLDHCLHDHFNAEIVTKTIENKQDAIDYLTWTLLYRRMTQNPNYYNLQGTTHRHLSDALSELVELTLKDLENSKCIAVKDEMDTVSLNLGMIASYYYISYQTIELFSMSLKEKTKTRALIEIISASSEFGNVPMRHKEDVILRQLAERLPGQLKNQKFTDPHVKVNLLIHAHLSRVKLTAELNKDTELIVLRACRLVQACVDVLSSNGWLSPAIHAMELSQMLTQAMYSNEPYLKQLPHCSAALLERAKAKEVTSVFELLELENDDRSDILQMEGAELADVARFCNHYPSIEVATELENDVVTSNDNLMLAVSLERDNDIDGLAPPVVAPLFPQKRKEEGWWLVIGDSESNALLTIKRLVINEKSSVQLDFAAPRPGHHKFKLFFISDSYLGADQEFDVAFKVEEPGRSNRKRKHEKEED.

Disordered regions lie at residues 54-82 and 202-243; these read GDRA…AQQF and DSDE…GDGH. The segment covering 220-231 has biased composition (acidic residues); it reads SEEESEEEEGVD. The Helicase ATP-binding 1 domain occupies 484-667; that stretch reads DSALRSKEHL…FLRVKPEHLH (184 aa). 497-504 is a binding site for ATP; the sequence is APTGAGKT. The DEAH box motif lies at 609–612; the sequence is DEIH. Positions 677 to 894 constitute a Helicase C-terminal domain; it reads PLEQQYIGVT…QMVSRLTDML (218 aa). Residues 975 to 1278 form the SEC63 1 domain; the sequence is TELGRIASHF…IGAETVLPIS (304 aa). A Helicase ATP-binding 2 domain is found at 1331–1506; the sequence is RTVFESNENV…WLGCSASATF (176 aa). Residue 1344 to 1351 coordinates ATP; sequence APNGSGKT. A DEAH box motif is present at residues 1448-1451; the sequence is DDLH. In terms of domain architecture, SEC63 2 spans 1812–2124; sequence LNLGMIASYY…YLGADQEFDV (313 aa).

Belongs to the helicase family. SKI2 subfamily.

It is found in the nucleus. It carries out the reaction ATP + H2O = ADP + phosphate + H(+). In terms of biological role, catalyzes the ATP-dependent unwinding of U4/U6 RNA duplices, an essential step in the assembly of a catalytically active spliceosome. Plays a role in pre-mRNA splicing. In Caenorhabditis elegans, this protein is U5 small nuclear ribonucleoprotein 200 kDa helicase.